The following is a 267-amino-acid chain: MSGNEKEGLDASDSDFDPSDEDDEAVDAETETEAEQPADDAEEATEAEPTDDESEADEAAGPQLDEDVMPDEQSEADLLIPVEDYLGAGVHIGTQQKTQDMERFIHRVRTDGLYVLDVSMTDERIRTAADFLSNYEPEQILAASSRQYGRFPAEKFAEAIGARVRTGRFIPGTLTNPDYDGYIEPDIVVVTDPIGDAQAVKEAITVGIPVIAMCDSNNTTSNVDLVVPTNNKGRKALSVVYWLLANETLDRRGAEPTYGLDDFESDI.

The disordered stretch occupies residues 1-72 (MSGNEKEGLD…QLDEDVMPDE (72 aa)). Over residues 10-72 (DASDSDFDPS…QLDEDVMPDE (63 aa)) the composition is skewed to acidic residues.

Belongs to the universal ribosomal protein uS2 family. Post-translationally, the N-terminus is blocked.

This Haloarcula marismortui (strain ATCC 43049 / DSM 3752 / JCM 8966 / VKM B-1809) (Halobacterium marismortui) protein is Small ribosomal subunit protein uS2 (rps2).